The sequence spans 1203 residues: DNA-directed RNA polymerase subunit beta (1203 aa).

Basic and acidic residues predominate over residues 1174–1195; sequence AAQEAKAAFEAEEAEKATKAEA. Residues 1174 to 1203 are disordered; sequence AAQEAKAAFEAEEAEKATKAEATEEAAEQE.

Belongs to the RNA polymerase beta chain family. In terms of assembly, the RNAP catalytic core consists of 2 alpha, 1 beta, 1 beta' and 1 omega subunit. When a sigma factor is associated with the core the holoenzyme is formed, which can initiate transcription.

The enzyme catalyses RNA(n) + a ribonucleoside 5'-triphosphate = RNA(n+1) + diphosphate. Its function is as follows. DNA-dependent RNA polymerase catalyzes the transcription of DNA into RNA using the four ribonucleoside triphosphates as substrates. This Streptococcus pneumoniae (strain JJA) protein is DNA-directed RNA polymerase subunit beta.